The sequence spans 207 residues: Ribosomal RNA small subunit methyltransferase G (207 aa).

S-adenosyl-L-methionine is bound by residues Gly73, Leu78, 124–125, and Arg139; that span reads VE.

It belongs to the methyltransferase superfamily. RNA methyltransferase RsmG family.

The protein resides in the cytoplasm. It catalyses the reaction guanosine(527) in 16S rRNA + S-adenosyl-L-methionine = N(7)-methylguanosine(527) in 16S rRNA + S-adenosyl-L-homocysteine. In terms of biological role, specifically methylates the N7 position of guanine in position 527 of 16S rRNA. The sequence is that of Ribosomal RNA small subunit methyltransferase G from Salmonella schwarzengrund (strain CVM19633).